Reading from the N-terminus, the 145-residue chain is KKQCGVLEGLKVKSEWGRAYGSGHDREAFSQAIWRATFAQVPESRSLFKRVHGDDTSHPAFIAHAERVLGGLDIAISTLDQPATLKEELDHLQVQHEGRKIPDNYFDAFKTAILHVVAAQLGRCYDREAWDACIDHIEDGIKGHH.

A Globin domain is found at 3-145; the sequence is QCGVLEGLKV…HIEDGIKGHH (143 aa). Cysteines 4 and 133 form a disulfide. Histidine 96 lines the heme b pocket.

Belongs to the globin family. The extracellular hemoglobin of the earthworm consists of 12 subunits that have a hexagonal bilayer structure with a molecular weight near 3.8 million. Each one-twelfth subunit is composed primarily of disulfide linked trimers (chains A, B, and C) and monomers (chain D).

The protein is Extracellular globin-2 of Lumbricus terrestris (Common earthworm).